Here is a 177-residue protein sequence, read N- to C-terminus: Large ribosomal subunit protein uL6 (177 aa).

The protein belongs to the universal ribosomal protein uL6 family. As to quaternary structure, part of the 50S ribosomal subunit.

Functionally, this protein binds to the 23S rRNA, and is important in its secondary structure. It is located near the subunit interface in the base of the L7/L12 stalk, and near the tRNA binding site of the peptidyltransferase center. In Teredinibacter turnerae (strain ATCC 39867 / T7901), this protein is Large ribosomal subunit protein uL6.